We begin with the raw amino-acid sequence, 187 residues long: Elongation factor P (187 aa).

This sequence belongs to the elongation factor P family.

It is found in the cytoplasm. It participates in protein biosynthesis; polypeptide chain elongation. Its function is as follows. Involved in peptide bond synthesis. Stimulates efficient translation and peptide-bond synthesis on native or reconstituted 70S ribosomes in vitro. Probably functions indirectly by altering the affinity of the ribosome for aminoacyl-tRNA, thus increasing their reactivity as acceptors for peptidyl transferase. The chain is Elongation factor P from Mycolicibacterium smegmatis (strain ATCC 700084 / mc(2)155) (Mycobacterium smegmatis).